We begin with the raw amino-acid sequence, 745 residues long: Protein PHOX1 (745 aa).

Over residues 1–10 (MGKPTGKKKN) the composition is skewed to basic residues. A disordered region spans residues 1 to 37 (MGKPTGKKKNNNYTEMPPTESSTTGGGKTGKSFDRSA). TPR repeat units lie at residues 52 to 85 (ALEL…LPRD), 90 to 125 (AYLR…SPRF), and 126 to 159 (SKAL…EPEN). The region spanning 280-359 (TRTVKLVHGD…GSFRLYIAEV (80 aa)) is the PB1 domain. 4 TPR repeats span residues 406-441 (EHWI…YTEA), 443-472 (EDIV…AMFN), 494-528 (ETIL…KSDF), and 553-586 (GEVD…WEEM).

In terms of assembly, interacts with myosin XI-1 and XI-K.

It is found in the cytoplasmic vesicle membrane. Functionally, carboxylate clamp type tetratricopeptide repeat protein that may act as a potential Hsp90/Hsp70 co-chaperone. Contributes to polar growth of root hairs. This chain is Protein PHOX1, found in Arabidopsis thaliana (Mouse-ear cress).